A 1488-amino-acid polypeptide reads, in one-letter code: Chromosome partition protein MukB (1488 aa).

Residue 34–41 participates in ATP binding; that stretch reads GGNGAGKS. 3 coiled-coil regions span residues 326-418, 444-472, and 509-602; these read LEAD…QYNQ, LDTFQAKEQEATEKLLSLEQKMSVAQTAH, and RHLA…RRAP. Residues 666-783 form a flexible hinge region; the sequence is PGGAEDQRLN…SLPIFGRAAR (118 aa). Coiled-coil stretches lie at residues 835-923, 977-1116, and 1209-1265; these read EAEI…AKLE, EMLS…AKAG, and VEAI…LQSV. Residues 1049 to 1074 are disordered; it reads ADSGAEERARQRRDELHAQLSNNRSR. Residues 1051 to 1065 are compositionally biased toward basic and acidic residues; it reads SGAEERARQRRDELH.

This sequence belongs to the SMC family. MukB subfamily. In terms of assembly, homodimerization via its hinge domain. Binds to DNA via its C-terminal region. Interacts, and probably forms a ternary complex, with MukE and MukF via its C-terminal region. The complex formation is stimulated by calcium or magnesium. Interacts with tubulin-related protein FtsZ.

The protein localises to the cytoplasm. It is found in the nucleoid. Plays a central role in chromosome condensation, segregation and cell cycle progression. Functions as a homodimer, which is essential for chromosome partition. Involved in negative DNA supercoiling in vivo, and by this means organize and compact chromosomes. May achieve or facilitate chromosome segregation by condensation DNA from both sides of a centrally located replisome during cell division. The protein is Chromosome partition protein MukB of Salmonella agona (strain SL483).